A 150-amino-acid polypeptide reads, in one-letter code: Large ribosomal subunit protein bL9 (150 aa).

This sequence belongs to the bacterial ribosomal protein bL9 family.

Functionally, binds to the 23S rRNA. This Streptococcus gordonii (strain Challis / ATCC 35105 / BCRC 15272 / CH1 / DL1 / V288) protein is Large ribosomal subunit protein bL9.